We begin with the raw amino-acid sequence, 117 residues long: Hainantoxin-XV.2 (117 aa).

The signal sequence occupies residues 1–20; the sequence is MKLCAVIIASLLVCAAVASS. The segment at 18–55 is disordered; sequence ASSSDNQKEFAQEKEMTREETQSLGEHEKDDEVTGSEE. The propeptide occupies 21–56; sequence SDNQKEFAQEKEMTREETQSLGEHEKDDEVTGSEER. Residues 23–55 are compositionally biased toward basic and acidic residues; sequence NQKEFAQEKEMTREETQSLGEHEKDDEVTGSEE. 4 cysteine pairs are disulfide-bonded: cysteine 58–cysteine 72, cysteine 65–cysteine 78, cysteine 69–cysteine 115, and cysteine 71–cysteine 91.

The protein belongs to the neurotoxin 03 (Tx2) family. 02 subfamily. HNTX-XV sub-subfamily. As to expression, expressed by the venom gland.

The protein resides in the secreted. Its function is as follows. Putative ion channel inhibitor. The chain is Hainantoxin-XV.2 from Cyriopagopus hainanus (Chinese bird spider).